A 148-amino-acid polypeptide reads, in one-letter code: Large ribosomal subunit protein bL9 (148 aa).

The protein belongs to the bacterial ribosomal protein bL9 family.

Functionally, binds to the 23S rRNA. The polypeptide is Large ribosomal subunit protein bL9 (Bifidobacterium animalis subsp. lactis (strain AD011)).